The following is a 218-amino-acid chain: MSLGILGKKLGMSQLFDDQGRAVPVTLIEAGPCRITQLKSADTDGYAAVQIGFQLIREKLINKPSKGHLAKSGNDLLRHLREYRVENSSEFELGASITVDDFEKGQKVDISGDTMGRGFAGYQKRHGFSRGPMSHGSKNHRLPGSIGAGTTPGRVYPGKRMAGRMGGKKVTTRALEILKIDTNHNLLVVKGSVPGKPGSLLNIRPAKRVGAPTQQGGK.

Disordered stretches follow at residues 128–167 (FSRG…RMGG) and 199–218 (SLLN…QGGK).

It belongs to the universal ribosomal protein uL3 family. In terms of assembly, part of the 50S ribosomal subunit. Forms a cluster with proteins L14 and L19.

In terms of biological role, one of the primary rRNA binding proteins, it binds directly near the 3'-end of the 23S rRNA, where it nucleates assembly of the 50S subunit. This chain is Large ribosomal subunit protein uL3, found in Prochlorococcus marinus (strain NATL2A).